The primary structure comprises 181 residues: Large ribosomal subunit protein uL5 (181 aa).

This sequence belongs to the universal ribosomal protein uL5 family. As to quaternary structure, part of the 50S ribosomal subunit; part of the 5S rRNA/L5/L18/L25 subcomplex. Contacts the 5S rRNA and the P site tRNA. Forms a bridge to the 30S subunit in the 70S ribosome.

This is one of the proteins that bind and probably mediate the attachment of the 5S RNA into the large ribosomal subunit, where it forms part of the central protuberance. In the 70S ribosome it contacts protein S13 of the 30S subunit (bridge B1b), connecting the 2 subunits; this bridge is implicated in subunit movement. Contacts the P site tRNA; the 5S rRNA and some of its associated proteins might help stabilize positioning of ribosome-bound tRNAs. This chain is Large ribosomal subunit protein uL5, found in Mycoplasmopsis pulmonis (strain UAB CTIP) (Mycoplasma pulmonis).